The chain runs to 102 residues: Co-chaperonin GroES (102 aa).

It belongs to the GroES chaperonin family. In terms of assembly, heptamer of 7 subunits arranged in a ring. Interacts with the chaperonin GroEL.

It localises to the cytoplasm. Together with the chaperonin GroEL, plays an essential role in assisting protein folding. The GroEL-GroES system forms a nano-cage that allows encapsulation of the non-native substrate proteins and provides a physical environment optimized to promote and accelerate protein folding. GroES binds to the apical surface of the GroEL ring, thereby capping the opening of the GroEL channel. The chain is Co-chaperonin GroES from Chlamydia felis (strain Fe/C-56) (Chlamydophila felis).